Reading from the N-terminus, the 483-residue chain is Keratin, type II cytoskeletal 8 (483 aa).

The span at 1–16 (MSIRVTQKSYKVSTSG) shows a compositional bias: polar residues. Positions 1–41 (MSIRVTQKSYKVSTSGPRAFSSRSYTSGPGSRISSSSFSRV) are disordered. The head stretch occupies residues 1 to 90 (MSIRVTQKSY…DPNIQAVRTQ (90 aa)). S9 bears the Phosphoserine; by PKC/PRKCE mark. A Glycyl lysine isopeptide (Lys-Gly) (interchain with G-Cter in SUMO2) cross-link involves residue K11. S13, S15, S21, and S22 each carry phosphoserine. R23 bears the Omega-N-methylarginine mark. Phosphoserine; by PKC/PRKCE is present on S24. Residues 24–41 (SYTSGPGSRISSSSFSRV) are compositionally biased toward low complexity. A Phosphothreonine modification is found at T26. Residues S27 and S31 each carry the phosphoserine modification. Residue R32 is modified to Omega-N-methylarginine. Phosphoserine occurs at positions 34, 37, and 39. R40 is subject to Omega-N-methylarginine. 2 positions are modified to phosphoserine: S43 and S44. An Asymmetric dimethylarginine; alternate modification is found at R47. R47 is modified (omega-N-methylarginine; alternate). S74 carries the phosphoserine; by MAPK modification. Positions 91–126 (EKEQIKTLNNKFASFIDKVRFLEQQNKMLETKWSLL) are coil 1A. Positions 91-402 (EKEQIKTLNN…KLLEGEESRL (312 aa)) constitute an IF rod domain. Residue K101 is modified to N6-malonyllysine. Glycyl lysine isopeptide (Lys-Gly) (interchain with G-Cter in SUMO2) cross-links involve residues K122 and K130. The interval 127–143 (QQQKTARSNMDNMFESY) is linker 1. The segment at 144–235 (INNLRRQLET…QLYEEEIREL (92 aa)) is coil 1B. A Glycyl lysine isopeptide (Lys-Gly) (interchain with G-Cter in SUMO1); alternate cross-link involves residue K197. K197 is covalently cross-linked (Glycyl lysine isopeptide (Lys-Gly) (interchain with G-Cter in SUMO2); alternate). Position 207 is an N6-acetyllysine (K207). At Y228 the chain carries Phosphotyrosine. A linker 12 region spans residues 236 to 259 (QSQISDTSVVLSMDNSRSLDMDSI). A phosphoserine mark is found at S253 and S258. The tract at residues 260-398 (IAEVKAQYED…ATYRKLLEGE (139 aa)) is coil 2. A necessary for interaction with PNN region spans residues 261–382 (AEVKAQYEDI…EYQELMNVKL (122 aa)). A Glycyl lysine isopeptide (Lys-Gly) (interchain with G-Cter in SUMO2) cross-link involves residue K264. S274 carries the phosphoserine modification. Residue K285 forms a Glycyl lysine isopeptide (Lys-Gly) (interchain with G-Cter in SUMO2) linkage. S291 is modified (phosphoserine). K295 participates in a covalent cross-link: Glycyl lysine isopeptide (Lys-Gly) (interchain with G-Cter in SUMO2); alternate. N6-acetyllysine; alternate is present on K295. Residue K304 forms a Glycyl lysine isopeptide (Lys-Gly) (interchain with G-Cter in SUMO2) linkage. K325 is covalently cross-linked (Glycyl lysine isopeptide (Lys-Gly) (interchain with G-Cter in SUMO2); alternate). N6-acetyllysine; alternate is present on K325. S330 carries the phosphoserine modification. Residue K393 forms a Glycyl lysine isopeptide (Lys-Gly) (interchain with G-Cter in SUMO2) linkage. Positions 399-483 (ESRLESGMQN…VSESSDVLPK (85 aa)) are tail. 5 positions are modified to phosphoserine: S400, S404, S410, S417, and S424. Residue S432 is modified to Phosphoserine; by CaMK2 and MAPK. K472 participates in a covalent cross-link: Glycyl lysine isopeptide (Lys-Gly) (interchain with G-Cter in SUMO1); alternate. A Glycyl lysine isopeptide (Lys-Gly) (interchain with G-Cter in SUMO2); alternate cross-link involves residue K472. Phosphoserine is present on residues S475, S477, and S478.

This sequence belongs to the intermediate filament family. As to quaternary structure, heterotetramer of two type I and two type II keratins. Forms a heterodimer with KRT18. Associates with KRT20. Interacts with PLEC isoform 1C, when in a heterodimer with KRT18. Interacts with PNN. When associated with KRT19, interacts with DMD. Interacts with TCHP. Interacts with APEX1. Interacts with GPER1. Interacts with EPPK1. Interacts with PKP1 and PKP2. (Microbial infection) Interacts with hepatitis C virus/HCV core protein. Phosphorylation on serine residues is enhanced during EGF stimulation and mitosis. Ser-74 phosphorylation plays an important role in keratin filament reorganization. In terms of processing, O-glycosylated. O-GlcNAcylation at multiple sites increases solubility, and decreases stability by inducing proteasomal degradation. Post-translationally, O-glycosylated (O-GlcNAcylated), in a cell cycle-dependent manner. As to expression, observed in muscle fibers accumulating in the costameres of myoplasm at the sarcolemma membrane in structures that contain dystrophin and spectrin. Expressed in gingival mucosa and hard palate of the oral cavity.

The protein resides in the cytoplasm. It localises to the nucleus. Its subcellular location is the nucleoplasm. It is found in the nucleus matrix. Together with KRT19, helps to link the contractile apparatus to dystrophin at the costameres of striated muscle. This chain is Keratin, type II cytoskeletal 8 (KRT8), found in Homo sapiens (Human).